A 302-amino-acid chain; its full sequence is Putative glycine N-acyltransferase-like protein 1B (302 aa).

This sequence belongs to the glycine N-acyltransferase family.

It carries out the reaction an acyl-CoA + L-glutamine = an N(2)-acyl-L-glutamine + CoA + H(+). Functionally, putative acyltransferase which transfers an acyl group to the N-terminus of glutamine. Can use phenylacetyl-CoA as an acyl donor. The protein is Putative glycine N-acyltransferase-like protein 1B of Homo sapiens (Human).